A 2148-amino-acid chain; its full sequence is Polyketide synthase 1 (2148 aa).

Positions 19–261 (FIFGDQSSCN…TPLAVHAPYH (243 aa)) are N-terminal acylcarrier protein transacylase domain (SAT). Residues 394-829 (ESKIAIIGMS…GGNTALLVED (436 aa)) enclose the Ketosynthase family 3 (KS3) domain. Residues C566, H701, and H745 each act as for beta-ketoacyl synthase activity in the active site. The segment at 929-1233 (AFVFSGQGSQ…PSLMRNKDGW (305 aa)) is malonyl-CoA:ACP transacylase (MAT) domain. Residue S1018 is the For acyl/malonyl transferase activity of the active site. The segment at 1310–1624 (TASVHRIVHE…RKVLNTAMPP (315 aa)) is product template (PT) domain. The N-terminal hotdog fold stretch occupies residues 1314–1447 (HRIVHESVEK…SSLHFEQPKV (134 aa)). The region spanning 1314 to 1619 (HRIVHESVEK…FQGIPRKVLN (306 aa)) is the PKS/mFAS DH domain. H1346 functions as the Proton acceptor; for dehydratase activity in the catalytic mechanism. The segment at 1474–1619 (LNSRMSSGVI…FQGIPRKVLN (146 aa)) is C-terminal hotdog fold. D1533 acts as the Proton donor; for dehydratase activity in catalysis. The segment at 1619-1655 (NTAMPPPKSQNEAPVRSGPAKPAVKPPRSASSEHSGH) is disordered. The Carrier 1 domain occupies 1678–1752 (RNPMLPVFKI…DLAAHLGMDT (75 aa)). The residue at position 1712 (S1712) is an O-(pantetheine 4'-phosphoryl)serine. Low complexity predominate over residues 1755 to 1790 (ADQSSGQSSSSGGLSPRSDSIGEMTSSATTPPSMSP). The tract at residues 1755 to 1796 (ADQSSGQSSSSGGLSPRSDSIGEMTSSATTPPSMSPRGSVSG) is disordered. The Carrier 2 domain maps to 1793–1870 (SVSGSQCKDV…SFKHMFQQGH (78 aa)). S1830 carries the post-translational modification O-(pantetheine 4'-phosphoryl)serine. Positions 1882–2146 (LKQYRATSTL…ERVAAFIRSI (265 aa)) are thioesterase (TE) domain. S1973 acts as the For thioesterase activity in catalysis.

Functionally, polyketide synthase; part of the Pks1 gene cluster that mediates the biosynthesis of an anthraquinone derivative pigment that contributes to conidial pigmentation that provides protection from UV radiation, heat and cold stress. The polyketide synthase Pks1 produces 1-acetyl-2,4,6,8-tetrahydroxy-9,10-anthraquinone though condensation of acetyl-CoA with malonyl-CoA. The dehydratase EthD and the laccase Mlac1 further convert the anthraquinone derivative into the final conidial pigment. In Metarhizium brunneum (strain ARSEF 3297), this protein is Polyketide synthase 1.